Here is a 253-residue protein sequence, read N- to C-terminus: 5'-nucleotidase SurE (253 aa).

4 residues coordinate a divalent metal cation: aspartate 8, aspartate 9, serine 39, and asparagine 96.

It belongs to the SurE nucleotidase family. A divalent metal cation is required as a cofactor.

The protein localises to the cytoplasm. It carries out the reaction a ribonucleoside 5'-phosphate + H2O = a ribonucleoside + phosphate. Nucleotidase that shows phosphatase activity on nucleoside 5'-monophosphates. The protein is 5'-nucleotidase SurE of Rhodopirellula baltica (strain DSM 10527 / NCIMB 13988 / SH1).